We begin with the raw amino-acid sequence, 480 residues long: Cytochrome c oxidase subunit 1 (480 aa).

Residues Ile22 to Ile42 form a helical membrane-spanning segment. Positions 45 and 50 each coordinate Ca(2+). The next 8 membrane-spanning stretches (helical) occupy residues Leu64–Gly84, Ser109–Gly129, Leu151–Ile171, Ile194–Met214, Leu240–Ile260, Met278–Tyr298, Tyr309–Val329, and Leu343–Val363. His69 is a binding site for Fe(II)-heme a. A Cu cation-binding site is contributed by His246. A cross-link (1'-histidyl-3'-tyrosine (His-Tyr)) is located at residues His246–Tyr250. Residue Tyr250 participates in O2 binding. Residues His295 and His296 each coordinate Cu cation. Mg(2+) contacts are provided by His374 and Asp375. Residue His382 participates in heme a3 binding. The next 2 membrane-spanning stretches (helical) occupy residues His382–Ile402 and Leu416–Phe436. Residue His384 coordinates Fe(II)-heme a. Ca(2+) is bound at residue Pro447. The helical transmembrane segment at Phe458 to Ile478 threads the bilayer.

This sequence belongs to the heme-copper respiratory oxidase family. As to quaternary structure, component of the cytochrome c oxidase (complex IV, CIV), a multisubunit enzyme composed of a catalytic core of 3 subunits and several supernumerary subunits. The complex exists as a monomer or a dimer and forms supercomplexes (SCs) in the inner mitochondrial membrane with ubiquinol-cytochrome c oxidoreductase (cytochrome b-c1 complex, complex III, CIII). Heme is required as a cofactor. Requires Cu cation as cofactor.

The protein resides in the mitochondrion inner membrane. The catalysed reaction is 4 Fe(II)-[cytochrome c] + O2 + 8 H(+)(in) = 4 Fe(III)-[cytochrome c] + 2 H2O + 4 H(+)(out). It participates in energy metabolism; oxidative phosphorylation. Its function is as follows. Component of the cytochrome c oxidase, the last enzyme in the mitochondrial electron transport chain which drives oxidative phosphorylation. The respiratory chain contains 3 multisubunit complexes succinate dehydrogenase (complex II, CII), ubiquinol-cytochrome c oxidoreductase (cytochrome b-c1 complex, complex III, CIII) and cytochrome c oxidase (complex IV, CIV), that cooperate to transfer electrons derived from NADH and succinate to molecular oxygen, creating an electrochemical gradient over the inner membrane that drives transmembrane transport and the ATP synthase. Cytochrome c oxidase is the component of the respiratory chain that catalyzes the reduction of oxygen to water. Electrons originating from reduced cytochrome c in the intermembrane space (IMS) are transferred via the dinuclear copper A center (CU(A)) of subunit 2 and heme A of subunit 1 to the active site in subunit 1, a binuclear center (BNC) formed by heme A3 and copper B (CU(B)). The BNC reduces molecular oxygen to 2 water molecules using 4 electrons from cytochrome c in the IMS and 4 protons from the mitochondrial matrix. This Theileria annulata protein is Cytochrome c oxidase subunit 1 (MT-CO1).